A 487-amino-acid polypeptide reads, in one-letter code: Signal recognition particle subunit SRP54 (487 aa).

The segment at 1–295 is G-domain; it reads MVLSQLGSSL…DAESFVRKLL (295 aa). GTP is bound by residues 108 to 115, 190 to 194, and 248 to 251; these read GLQGAGKT, DTSGR, and TKLD. The interval 296-487 is M-domain; sequence GMGDLKGIAK…LGGTGKKGKK (192 aa).

This sequence belongs to the GTP-binding SRP family. SRP54 subfamily. Component of a signal recognition particle (SRP) complex that consists of a 7SL RNA molecule of 300 nucleotides and six protein subunits: SRP72, SRP68, SRP54, SRP19, SRP14 and SRP9.

It localises to the cytoplasm. Its subcellular location is the endoplasmic reticulum. The catalysed reaction is GTP + H2O = GDP + phosphate + H(+). In terms of biological role, component of the signal recognition particle (SRP) complex, a ribonucleoprotein complex that mediates the cotranslational targeting of secretory and membrane proteins to the endoplasmic reticulum (ER). As part of the SRP complex, associates with the SRP receptor (SR) component SRPRA to target secretory proteins to the endoplasmic reticulum membrane. Binds to the signal sequence of presecretory proteins when they emerge from the ribosomes. Displays basal GTPase activity, and stimulates reciprocal GTPase activation of the SR subunit SRPRA. Forms a guanosine 5'-triphosphate (GTP)-dependent complex with the SR subunit SRPRA. SR compaction and GTPase mediated rearrangement of SR drive SRP-mediated cotranslational protein translocation into the ER. Requires the presence of SRP9/SRP14 and/or SRP19 to stably interact with RNA. In Entamoeba histolytica (strain ATCC 30459 / HM-1:IMSS / ABRM), this protein is Signal recognition particle subunit SRP54.